The sequence spans 146 residues: Transcriptional regulator MraZ (146 aa).

SpoVT-AbrB domains follow at residues Thr-6–Glu-49 and Thr-78–Ser-121.

Belongs to the MraZ family. In terms of assembly, forms oligomers.

Its subcellular location is the cytoplasm. It is found in the nucleoid. The chain is Transcriptional regulator MraZ from Mesoplasma florum (strain ATCC 33453 / NBRC 100688 / NCTC 11704 / L1) (Acholeplasma florum).